A 254-amino-acid polypeptide reads, in one-letter code: Caffeoyl-CoA O-methyltransferase (254 aa).

A disordered region spans residues 1–25 (MATTNVEENKQTQEQQPKEIKHQEV). The span at 7–25 (EENKQTQEQQPKEIKHQEV) shows a compositional bias: basic and acidic residues. Residue Lys-28 coordinates substrate. Residues Thr-70, Glu-92, 94 to 95 (GV), Ser-100, Asp-118, and Ala-147 each bind S-adenosyl-L-methionine. Asp-170 serves as a coordination point for substrate. Asp-170 is an a divalent metal cation binding site. S-adenosyl-L-methionine is bound at residue Asp-172. The a divalent metal cation site is built by Asp-196 and Asn-197. A substrate-binding site is contributed by Asn-201.

The protein belongs to the class I-like SAM-binding methyltransferase superfamily. Cation-dependent O-methyltransferase family. CCoAMT subfamily. A divalent metal cation serves as cofactor.

It carries out the reaction (E)-caffeoyl-CoA + S-adenosyl-L-methionine = (E)-feruloyl-CoA + S-adenosyl-L-homocysteine + H(+). It functions in the pathway aromatic compound metabolism; phenylpropanoid biosynthesis. Its function is as follows. Methylates caffeoyl-CoA to feruloyl-CoA and 5-hydroxyferuloyl-CoA to sinapoyl-CoA. Plays a role in the synthesis of feruloylated polysaccharides. Involved in the reinforcement of the plant cell wall. Also involved in the responding to wounding or pathogen challenge by the increased formation of cell wall-bound ferulic acid polymers. In Mesembryanthemum crystallinum (Common ice plant), this protein is Caffeoyl-CoA O-methyltransferase.